The chain runs to 145 residues: D-aminoacyl-tRNA deacylase (145 aa).

The Gly-cisPro motif, important for rejection of L-amino acids motif lies at 137-138 (GP).

Belongs to the DTD family. As to quaternary structure, homodimer.

The protein localises to the cytoplasm. The catalysed reaction is glycyl-tRNA(Ala) + H2O = tRNA(Ala) + glycine + H(+). The enzyme catalyses a D-aminoacyl-tRNA + H2O = a tRNA + a D-alpha-amino acid + H(+). Functionally, an aminoacyl-tRNA editing enzyme that deacylates mischarged D-aminoacyl-tRNAs. Also deacylates mischarged glycyl-tRNA(Ala), protecting cells against glycine mischarging by AlaRS. Acts via tRNA-based rather than protein-based catalysis; rejects L-amino acids rather than detecting D-amino acids in the active site. By recycling D-aminoacyl-tRNA to D-amino acids and free tRNA molecules, this enzyme counteracts the toxicity associated with the formation of D-aminoacyl-tRNA entities in vivo and helps enforce protein L-homochirality. The polypeptide is D-aminoacyl-tRNA deacylase (Pseudomonas paraeruginosa (strain DSM 24068 / PA7) (Pseudomonas aeruginosa (strain PA7))).